A 348-amino-acid polypeptide reads, in one-letter code: Putative methylesterase 14, chloroplastic (348 aa).

Disordered stretches follow at residues 1 to 29 (MGNK…MNRS) and 60 to 80 (GSMS…SDPF). Residues 1–76 (MGNKIISMMK…GSTSTRKRTL (76 aa)) constitute a chloroplast transit peptide. Ser-77 carries the phosphoserine modification. Ser-172 (acyl-ester intermediate) is an active-site residue. Catalysis depends on charge relay system residues Asp-299 and His-327.

It belongs to the AB hydrolase superfamily. Methylesterase family.

It is found in the plastid. It localises to the chloroplast. In terms of biological role, putative methylesterase. The sequence is that of Putative methylesterase 14, chloroplastic from Arabidopsis thaliana (Mouse-ear cress).